A 122-amino-acid polypeptide reads, in one-letter code: Large ribosomal subunit protein uL14 (122 aa).

This sequence belongs to the universal ribosomal protein uL14 family. In terms of assembly, part of the 50S ribosomal subunit. Forms a cluster with proteins L3 and L19. In the 70S ribosome, L14 and L19 interact and together make contacts with the 16S rRNA in bridges B5 and B8.

Its function is as follows. Binds to 23S rRNA. Forms part of two intersubunit bridges in the 70S ribosome. This is Large ribosomal subunit protein uL14 from Coxiella burnetii (strain RSA 331 / Henzerling II).